The following is a 306-amino-acid chain: D-alanine--D-alanine ligase (306 aa).

The ATP-grasp domain occupies 101–300 (KVVMAAAGIP…FGELVTWMVE (200 aa)). 128 to 182 (LPPPYVLKPNTGGSSVGVFIVKEDQPHPPQELFRADWTFGESLMAEPFIKGLELT) is a binding site for ATP. Residues Asp-250, Glu-267, and Asn-269 each contribute to the Mg(2+) site.

The protein belongs to the D-alanine--D-alanine ligase family. Mg(2+) serves as cofactor. The cofactor is Mn(2+).

It is found in the cytoplasm. The enzyme catalyses 2 D-alanine + ATP = D-alanyl-D-alanine + ADP + phosphate + H(+). Its pathway is cell wall biogenesis; peptidoglycan biosynthesis. In terms of biological role, cell wall formation. This chain is D-alanine--D-alanine ligase, found in Azorhizobium caulinodans (strain ATCC 43989 / DSM 5975 / JCM 20966 / LMG 6465 / NBRC 14845 / NCIMB 13405 / ORS 571).